Here is a 259-residue protein sequence, read N- to C-terminus: Exosome complex component Rrp42 (259 aa).

Belongs to the RNase PH family. Rrp42 subfamily. In terms of assembly, component of the archaeal exosome complex. Forms a hexameric ring-like arrangement composed of 3 Rrp41-Rrp42 heterodimers. The hexameric ring associates with a trimer of Rrp4 and/or Csl4 subunits.

The protein localises to the cytoplasm. Functionally, non-catalytic component of the exosome, which is a complex involved in RNA degradation. Contributes to the structuring of the Rrp41 active site. In Archaeoglobus fulgidus (strain ATCC 49558 / DSM 4304 / JCM 9628 / NBRC 100126 / VC-16), this protein is Exosome complex component Rrp42.